The chain runs to 343 residues: Glycerol-3-phosphate dehydrogenase [NAD(P)+] (343 aa).

Positions 29, 49, and 122 each coordinate NADPH. The sn-glycerol 3-phosphate site is built by Lys-122, Gly-150, and Ser-152. Ala-154 is an NADPH binding site. Positions 205, 258, 268, 269, and 270 each coordinate sn-glycerol 3-phosphate. Residue Lys-205 is the Proton acceptor of the active site. Position 269 (Arg-269) interacts with NADPH. The NADPH site is built by Leu-288 and Glu-290.

It belongs to the NAD-dependent glycerol-3-phosphate dehydrogenase family.

It is found in the cytoplasm. It catalyses the reaction sn-glycerol 3-phosphate + NAD(+) = dihydroxyacetone phosphate + NADH + H(+). It carries out the reaction sn-glycerol 3-phosphate + NADP(+) = dihydroxyacetone phosphate + NADPH + H(+). Its pathway is membrane lipid metabolism; glycerophospholipid metabolism. In terms of biological role, catalyzes the reduction of the glycolytic intermediate dihydroxyacetone phosphate (DHAP) to sn-glycerol 3-phosphate (G3P), the key precursor for phospholipid synthesis. This is Glycerol-3-phosphate dehydrogenase [NAD(P)+] from Mesorhizobium japonicum (strain LMG 29417 / CECT 9101 / MAFF 303099) (Mesorhizobium loti (strain MAFF 303099)).